A 336-amino-acid polypeptide reads, in one-letter code: Mitochondrial import receptor subunit TOM40 homolog (336 aa).

Residues methionine 1–phenylalanine 58 are disordered. The segment covering proline 10–proline 21 has biased composition (pro residues). Basic and acidic residues predominate over residues proline 42–leucine 52.

Belongs to the Tom40 family. As to quaternary structure, forms part of the preprotein translocase complex of the outer mitochondrial membrane (TOM complex). Interacts with mitochondrial targeting sequences.

The protein resides in the mitochondrion outer membrane. In terms of biological role, channel-forming protein essential for import of protein precursors into mitochondria. The polypeptide is Mitochondrial import receptor subunit TOM40 homolog (tomm40) (Xenopus laevis (African clawed frog)).